The chain runs to 187 residues: Orotate phosphoribosyltransferase (187 aa).

110–118 (EDVVTTGGS) lines the 5-phospho-alpha-D-ribose 1-diphosphate pocket. Orotate-binding residues include T114 and R142.

It belongs to the purine/pyrimidine phosphoribosyltransferase family. PyrE subfamily. In terms of assembly, homodimer. Mg(2+) serves as cofactor.

It catalyses the reaction orotidine 5'-phosphate + diphosphate = orotate + 5-phospho-alpha-D-ribose 1-diphosphate. Its pathway is pyrimidine metabolism; UMP biosynthesis via de novo pathway; UMP from orotate: step 1/2. Functionally, catalyzes the transfer of a ribosyl phosphate group from 5-phosphoribose 1-diphosphate to orotate, leading to the formation of orotidine monophosphate (OMP). This is Orotate phosphoribosyltransferase from Thermotoga maritima (strain ATCC 43589 / DSM 3109 / JCM 10099 / NBRC 100826 / MSB8).